Here is a 505-residue protein sequence, read N- to C-terminus: MSERETRGANEAIDFNDELRNRREKLAALRQQGVAFPNDFRRDHTSDQLHEEFDAKDNQELESLNIEVSVAGRMMTRRIMGKASFVTLQDVGGRIQLYVARDSLPEGVYNDQFKKWDLGDIIGARGTLFKTQTGELSIHCTELRLLTKALRPLPDKFHGLQDQEVRYRQRYLDLIANDKSRQTFVVRSKILAAIRQFMVARGFMEVETPMMQVIPGGASARPFITHHNALDLDMYLRIAPELYLKRLVVGGFERVFEINRNFRNEGISVRHNPEFTMMELYMAYADYHDLIELTESLFRTLAQEVLGTTKVTYGEHVFDFGKPFEKLTMREAIKKYRPETDMADLDNFDAAKALAESIGITVEKSWGLGRIVTEIFDEVAEAHLIQPTFITEYPAEVSPLARRNDVNPEITDRFEFFIGGREIGNGFSELNDAEDQAERFQEQVNAKAAGDDEAMFYDEDYVTALEYGLPPTAGLGIGIDRMIMLFTNSHTIRDVILFPAMRPQK.

Residues lysine 114 and lysine 156 each carry the N6-acetyllysine modification. Residues glutamate 415 and glutamate 422 each contribute to the Mg(2+) site.

The protein belongs to the class-II aminoacyl-tRNA synthetase family. Homodimer. Mg(2+) serves as cofactor.

The protein localises to the cytoplasm. The catalysed reaction is tRNA(Lys) + L-lysine + ATP = L-lysyl-tRNA(Lys) + AMP + diphosphate. The sequence is that of Lysine--tRNA ligase, heat inducible (lysU) from Escherichia coli O6:H1 (strain CFT073 / ATCC 700928 / UPEC).